Consider the following 205-residue polypeptide: MSDPTTAEIANEPRLITETGLDRRIADIIEPVLVQMGFRLVRVRMSGQNGLTLQIMTERNDGTMTVEDCEDVSKAVSPVLDVEDPIDKAYHLEVSSPGIDRPMVRKSDFVRWQGHLMKCETSIMVDGRKRFRGKIVSVDEEGFRLERDQPAYGEEAVVAIPFTALSDARLILTDDLIRDALAADKKAKAARAANENFEDEDRDIE.

It belongs to the RimP family.

It localises to the cytoplasm. Functionally, required for maturation of 30S ribosomal subunits. In Sinorhizobium fredii (strain NBRC 101917 / NGR234), this protein is Ribosome maturation factor RimP.